The primary structure comprises 434 residues: Histidinol dehydrogenase (434 aa).

Residues Ser-242, Gln-264, and His-267 each coordinate substrate. Zn(2+) contacts are provided by Gln-264 and His-267. Catalysis depends on proton acceptor residues Glu-332 and His-333. Positions 333, 366, 420, and 425 each coordinate substrate. Asp-366 contributes to the Zn(2+) binding site. Residue His-425 coordinates Zn(2+).

This sequence belongs to the histidinol dehydrogenase family. Requires Zn(2+) as cofactor.

The catalysed reaction is L-histidinol + 2 NAD(+) + H2O = L-histidine + 2 NADH + 3 H(+). It participates in amino-acid biosynthesis; L-histidine biosynthesis; L-histidine from 5-phospho-alpha-D-ribose 1-diphosphate: step 9/9. Catalyzes the sequential NAD-dependent oxidations of L-histidinol to L-histidinaldehyde and then to L-histidine. The protein is Histidinol dehydrogenase of Desulfotalea psychrophila (strain LSv54 / DSM 12343).